A 103-amino-acid chain; its full sequence is MQKIRKGDKVVVLTGKDKGRTGEVIQVMPKEDRAVVRGVNVVKRHQRQTQNQEAGIITKEAPIHLSNIAIADPKDGKPTRVGFKIDGDKKVRVAKRSGDVIDG.

The protein belongs to the universal ribosomal protein uL24 family. Part of the 50S ribosomal subunit.

One of two assembly initiator proteins, it binds directly to the 5'-end of the 23S rRNA, where it nucleates assembly of the 50S subunit. Its function is as follows. One of the proteins that surrounds the polypeptide exit tunnel on the outside of the subunit. This is Large ribosomal subunit protein uL24 from Sinorhizobium medicae (strain WSM419) (Ensifer medicae).